A 285-amino-acid chain; its full sequence is Steroidogenic acute regulatory protein, mitochondrial (285 aa).

The N-terminal 63 residues, 1-63 (MLLATFKLCA…RRSSLLGSRL (63 aa)), are a transit peptide targeting the mitochondrion. Ser-57 and Ser-195 each carry phosphoserine; by PKA. In terms of domain architecture, START spans 67–280 (LYSDQELAYL…LRKRLESHPA (214 aa)).

May interact with TSPO. Expressed in gonads, adrenal cortex and kidney.

The protein resides in the mitochondrion. It catalyses the reaction cholesterol(in) = cholesterol(out). The protein operates within steroid metabolism; cholesterol metabolism. Functionally, plays a key role in steroid hormone synthesis by enhancing the metabolism of cholesterol into pregnenolone. Mediates the transfer of cholesterol from the outer mitochondrial membrane to the inner mitochondrial membrane where it is cleaved to pregnenolone. The chain is Steroidogenic acute regulatory protein, mitochondrial (STAR) from Homo sapiens (Human).